The chain runs to 457 residues: tRNA-2-methylthio-N(6)-dimethylallyladenosine synthase (457 aa).

The 118-residue stretch at 3-120 (KKVYVKTFGC…LPQMIDKRRE (118 aa)) folds into the MTTase N-terminal domain. Residues C12, C49, C83, C157, C161, and C164 each coordinate [4Fe-4S] cluster. The Radical SAM core domain occupies 143–377 (RVDGPSAFVS…QATIEENVQR (235 aa)). In terms of domain architecture, TRAM spans 380 to 447 (DSMVGKIERI…PHSLRGELVL (68 aa)).

This sequence belongs to the methylthiotransferase family. MiaB subfamily. As to quaternary structure, monomer. [4Fe-4S] cluster is required as a cofactor.

The protein localises to the cytoplasm. It catalyses the reaction N(6)-dimethylallyladenosine(37) in tRNA + (sulfur carrier)-SH + AH2 + 2 S-adenosyl-L-methionine = 2-methylsulfanyl-N(6)-dimethylallyladenosine(37) in tRNA + (sulfur carrier)-H + 5'-deoxyadenosine + L-methionine + A + S-adenosyl-L-homocysteine + 2 H(+). Functionally, catalyzes the methylthiolation of N6-(dimethylallyl)adenosine (i(6)A), leading to the formation of 2-methylthio-N6-(dimethylallyl)adenosine (ms(2)i(6)A) at position 37 in tRNAs that read codons beginning with uridine. This Paraburkholderia xenovorans (strain LB400) protein is tRNA-2-methylthio-N(6)-dimethylallyladenosine synthase.